Reading from the N-terminus, the 223-residue chain is Putative 3-methyladenine DNA glycosylase (223 aa).

Belongs to the DNA glycosylase MPG family.

The protein is Putative 3-methyladenine DNA glycosylase of Rhodococcus jostii (strain RHA1).